A 96-amino-acid chain; its full sequence is MPLDAATKKQIMSEFAQKEGDTGSPEVQVAMLSRRISDLTEHLKTHKHDHHSRRGLLILVGQRRRLLQYLAKKDIQRFRALVDRLGIRRGAAGGAK.

This sequence belongs to the universal ribosomal protein uS15 family. As to quaternary structure, part of the 30S ribosomal subunit. Forms a bridge to the 50S subunit in the 70S ribosome, contacting the 23S rRNA.

Functionally, one of the primary rRNA binding proteins, it binds directly to 16S rRNA where it helps nucleate assembly of the platform of the 30S subunit by binding and bridging several RNA helices of the 16S rRNA. Forms an intersubunit bridge (bridge B4) with the 23S rRNA of the 50S subunit in the ribosome. The polypeptide is Small ribosomal subunit protein uS15 (Streptomyces griseus subsp. griseus (strain JCM 4626 / CBS 651.72 / NBRC 13350 / KCC S-0626 / ISP 5235)).